A 222-amino-acid chain; its full sequence is 2-hydroxypent-2,4-dienoate hydratase (222 aa).

The protein belongs to the hydratase/decarboxylase family.

It functions in the pathway aromatic compound metabolism; benzoate degradation via hydroxylation. In terms of biological role, conversion of 2-hydroxypent-2,4-dienoate into 4-hydroxy-2-oxopentanoate. In Pseudomonas putida (Arthrobacter siderocapsulatus), this protein is 2-hydroxypent-2,4-dienoate hydratase (xylJ).